The following is an 89-amino-acid chain: Small ribosomal subunit protein uS15 (89 aa).

Positions 1 to 21 (MSITPERKQEMIKDYATKEGD) are enriched in basic and acidic residues. The tract at residues 1-23 (MSITPERKQEMIKDYATKEGDTG) is disordered.

Belongs to the universal ribosomal protein uS15 family. As to quaternary structure, part of the 30S ribosomal subunit. Forms a bridge to the 50S subunit in the 70S ribosome, contacting the 23S rRNA.

One of the primary rRNA binding proteins, it binds directly to 16S rRNA where it helps nucleate assembly of the platform of the 30S subunit by binding and bridging several RNA helices of the 16S rRNA. In terms of biological role, forms an intersubunit bridge (bridge B4) with the 23S rRNA of the 50S subunit in the ribosome. The polypeptide is Small ribosomal subunit protein uS15 (Rhodospirillum rubrum (strain ATCC 11170 / ATH 1.1.1 / DSM 467 / LMG 4362 / NCIMB 8255 / S1)).